We begin with the raw amino-acid sequence, 120 residues long: Crustacean hyperglycemic hormones 1 (120 aa).

An N-terminal signal peptide occupies residues 1–24 (MIAFRAVWSALLASLLLLLLAPSA). 3 cysteine pairs are disulfide-bonded: Cys53–Cys89, Cys69–Cys85, and Cys72–Cys98. The residue at position 118 (Val118) is a Valine amide.

The protein belongs to the arthropod CHH/MIH/GIH/VIH hormone family. Produced by the medulla terminalis X-organ in the eyestalks and transported to the sinus gland where they are stored and released.

It is found in the secreted. Functionally, hormone found in the sinus gland of isopods and decapods which controls the blood sugar level. Has a secretagogue action over the amylase released from the midgut gland. May act as a stress hormone and may be involved in the control of molting and reproduction. This is Crustacean hyperglycemic hormones 1 from Penaeus japonicus (Kuruma prawn).